The chain runs to 427 residues: Putative F-box protein At3g44060 (427 aa).

Positions 1-46 (MDCLPDDLLVQILYLLPTKEAVSTSVLSKRWRTLFTRSDNLDFHDP) constitute an F-box domain.

This is Putative F-box protein At3g44060 from Arabidopsis thaliana (Mouse-ear cress).